We begin with the raw amino-acid sequence, 254 residues long: 3-dehydroquinate dehydratase (254 aa).

3-dehydroquinate contacts are provided by residues 47-49 and R83; that span reads EFR. The Proton donor/acceptor role is filled by H144. K171 acts as the Schiff-base intermediate with substrate in catalysis. Residues R213, S232, and Q236 each contribute to the 3-dehydroquinate site.

It belongs to the type-I 3-dehydroquinase family. As to quaternary structure, homodimer.

The catalysed reaction is 3-dehydroquinate = 3-dehydroshikimate + H2O. Its pathway is metabolic intermediate biosynthesis; chorismate biosynthesis; chorismate from D-erythrose 4-phosphate and phosphoenolpyruvate: step 3/7. Functionally, involved in the third step of the chorismate pathway, which leads to the biosynthesis of aromatic amino acids. Catalyzes the cis-dehydration of 3-dehydroquinate (DHQ) and introduces the first double bond of the aromatic ring to yield 3-dehydroshikimate. In Neisseria meningitidis serogroup C / serotype 2a (strain ATCC 700532 / DSM 15464 / FAM18), this protein is 3-dehydroquinate dehydratase.